A 552-amino-acid polypeptide reads, in one-letter code: MANVVVTGEQLDKAIREVVHILEDAVGCTAGPKGLTVAISKPYGAPEITKDGYKVIKSIKPEDPLALAIANIIAQSASQCNDKVGDGTTTCSILTAKVIEEVSKAKAAGADIVCIKDGVLKAKEAVLDALMSMKREVLSEEEIAQVATISANGDKNIGVKIAQCVQEVGKDGVITVEESKGFKELDVEKTDGMQFDRGYLSPYFVTNSEKMLVEFENPYILLTEKKLNIIQPILPILENVARSGRPLLIIAEDVEGEALSTLVLNKLRGGLHVAAVKAPGFGDRRKDMLGDIAILTGAKHVISDDLAIKMEDLTLAELGTAKNIRITKDTTTIIGSVDNSSDNVQSRINQIKVQIESSTSDYDKEKLRERLAKLSGGVAVLKVGGSSEVEVKERKDRVEDALHATRAAVEEGVVPGGGAALLYTLSVLENLKSKNDDEQLGINIIKRALQAPIKRIIRNSGSENAPCVIAHLLKQNDKELIFNVDTMNFANAFTSGVIDPLKVVRIAFDFAVSLAAVFMTLNAIVVDVPSKDDAGAAGGAGGMGGMGGMGGF.

ATP-binding positions include 29 to 32, Lys50, 86 to 90, Gly417, and Asp499; these read TAGP and DGTTT.

Belongs to the chaperonin (HSP60) family. Forms a cylinder of 14 subunits composed of two heptameric rings stacked back-to-back. Interacts with the co-chaperonin GroES.

The protein localises to the cytoplasm. The enzyme catalyses ATP + H2O + a folded polypeptide = ADP + phosphate + an unfolded polypeptide.. Its function is as follows. Together with its co-chaperonin GroES, plays an essential role in assisting protein folding. The GroEL-GroES system forms a nano-cage that allows encapsulation of the non-native substrate proteins and provides a physical environment optimized to promote and accelerate protein folding. The chain is Chaperonin GroEL from Ehrlichia canis (strain Jake).